The following is a 312-amino-acid chain: Small ribosomal subunit biogenesis GTPase RsgA (312 aa).

Residues 86–245 (QSFLKRPAVA…LADTPGFNRP (160 aa)) form the CP-type G domain. GTP is bound by residues 135–138 (TKID) and 187–195 (GPSGVGKTS). Residues C270, C275, H277, and C283 each coordinate Zn(2+).

Belongs to the TRAFAC class YlqF/YawG GTPase family. RsgA subfamily. As to quaternary structure, monomer. Associates with 30S ribosomal subunit, binds 16S rRNA. It depends on Zn(2+) as a cofactor.

It is found in the cytoplasm. One of several proteins that assist in the late maturation steps of the functional core of the 30S ribosomal subunit. Helps release RbfA from mature subunits. May play a role in the assembly of ribosomal proteins into the subunit. Circularly permuted GTPase that catalyzes slow GTP hydrolysis, GTPase activity is stimulated by the 30S ribosomal subunit. The chain is Small ribosomal subunit biogenesis GTPase RsgA from Prochlorococcus marinus (strain NATL2A).